The following is a 23-amino-acid chain: U1-ctenitoxin-Co1a (23 aa).

A disulfide bond links cysteine 10 and cysteine 20.

In terms of tissue distribution, expressed by the venom gland.

Its subcellular location is the secreted. Its function is as follows. Insecticidal neurotoxin that reversibly inhibits the N-methyl-D-aspartate (NMDA)-subtype of ionotropic glutamate receptor (GRIN) and inhibits inactivation of insect sodium channels (Nav). In vivo, is highly toxic to insects. The polypeptide is U1-ctenitoxin-Co1a (Ctenus ornatus (Brazilian spider)).